The chain runs to 286 residues: 1D-myo-inositol 2-acetamido-2-deoxy-alpha-D-glucopyranoside deacetylase (286 aa).

The Zn(2+) site is built by His12, Asp15, and His147.

The protein belongs to the MshB deacetylase family. Zn(2+) serves as cofactor.

It catalyses the reaction 1D-myo-inositol 2-acetamido-2-deoxy-alpha-D-glucopyranoside + H2O = 1D-myo-inositol 2-amino-2-deoxy-alpha-D-glucopyranoside + acetate. In terms of biological role, catalyzes the deacetylation of 1D-myo-inositol 2-acetamido-2-deoxy-alpha-D-glucopyranoside (GlcNAc-Ins) in the mycothiol biosynthesis pathway. This is 1D-myo-inositol 2-acetamido-2-deoxy-alpha-D-glucopyranoside deacetylase from Thermobifida fusca (strain YX).